The chain runs to 115 residues: Protein Diedel (115 aa).

The first 24 residues, 1-24 (MASPVVSLLLVGICALAFVHVARS), serve as a signal peptide directing secretion. 5 disulfide bridges follow: C26–C81, C27–C87, C42–C55, C60–C71, and C76–C83.

It belongs to the Diedel family. As to expression, detected in hemolymph (at protein level). Also expressed in the fat body and is probably synthesized in the fat body and secreted into the hemolymph.

The protein resides in the secreted. Cytokine which promotes survival following infection by Sindbis virus by suppressing the immune deficiency pathway. Following infection by the enteropathogenic bacteria E.carotovora limits intestinal stem cells proliferation. When secreted from muscle or adipose tissue, can attenuate age-related intestinal tissue degeneration by inhibiting apoptosis. The polypeptide is Protein Diedel (Drosophila melanogaster (Fruit fly)).